A 917-amino-acid polypeptide reads, in one-letter code: Isoleucine--tRNA ligase (917 aa).

Residues 59–69 carry the 'HIGH' region motif; it reads PYANGHIHIGH. An L-isoleucyl-5'-AMP-binding site is contributed by Glu-569. The short motif at 610 to 614 is the 'KMSKS' region element; the sequence is KMSKS. Lys-613 provides a ligand contact to ATP. Zn(2+)-binding residues include Cys-890, Cys-893, Cys-905, and Cys-908.

Belongs to the class-I aminoacyl-tRNA synthetase family. IleS type 1 subfamily. Monomer. Zn(2+) serves as cofactor.

The protein localises to the cytoplasm. The catalysed reaction is tRNA(Ile) + L-isoleucine + ATP = L-isoleucyl-tRNA(Ile) + AMP + diphosphate. Functionally, catalyzes the attachment of isoleucine to tRNA(Ile). As IleRS can inadvertently accommodate and process structurally similar amino acids such as valine, to avoid such errors it has two additional distinct tRNA(Ile)-dependent editing activities. One activity is designated as 'pretransfer' editing and involves the hydrolysis of activated Val-AMP. The other activity is designated 'posttransfer' editing and involves deacylation of mischarged Val-tRNA(Ile). The sequence is that of Isoleucine--tRNA ligase from Campylobacter jejuni subsp. jejuni serotype O:2 (strain ATCC 700819 / NCTC 11168).